The chain runs to 199 residues: Chaperone protein TorD (199 aa).

It belongs to the TorD/DmsD family. TorD subfamily.

It localises to the cytoplasm. Functionally, involved in the biogenesis of TorA. Acts on TorA before the insertion of the molybdenum cofactor and, as a result, probably favors a conformation of the apoenzyme that is competent for acquiring the cofactor. The chain is Chaperone protein TorD from Escherichia coli O139:H28 (strain E24377A / ETEC).